The chain runs to 305 residues: Tyrosine recombinase XerC (305 aa).

The Core-binding (CB) domain maps to 4–95; the sequence is ISIQELIKQW…TVKNFYKFLE (92 aa). The Tyr recombinase domain maps to 116 to 298; that stretch reads LLPKALSVDD…SIKHLEAVYN (183 aa). Catalysis depends on residues arginine 159, lysine 182, histidine 250, arginine 253, and histidine 276. Catalysis depends on tyrosine 285, which acts as the O-(3'-phospho-DNA)-tyrosine intermediate.

It belongs to the 'phage' integrase family. XerC subfamily. As to quaternary structure, forms a cyclic heterotetrameric complex composed of two molecules of XerC and two molecules of XerD.

It is found in the cytoplasm. Its function is as follows. Site-specific tyrosine recombinase, which acts by catalyzing the cutting and rejoining of the recombining DNA molecules. The XerC-XerD complex is essential to convert dimers of the bacterial chromosome into monomers to permit their segregation at cell division. It also contributes to the segregational stability of plasmids. The sequence is that of Tyrosine recombinase XerC from Rickettsia typhi (strain ATCC VR-144 / Wilmington).